The primary structure comprises 1014 residues: DNA translocase FtsK 2 (1014 aa).

A helical membrane pass occupies residues 1-21; it reads MFWIVLIVILLLALAGLFFVR. Disordered stretches follow at residues 89 to 142, 283 to 318, and 487 to 525; these read ESEP…EDIA, RHAG…RRRV, and SQAV…AVSE. Over residues 121–140 the composition is skewed to acidic residues; that stretch reads EEAETEEAEAAEEEAADTED. Positions 298–307 are enriched in polar residues; the sequence is DVSQGQSVSD. The region spanning 662–871 is the FtsK domain; the sequence is GQPVVTDLGK…FQVSSKIDSR (210 aa). 682–687 provides a ligand contact to ATP; the sequence is GSGKSV.

It belongs to the FtsK/SpoIIIE/SftA family. As to quaternary structure, homohexamer. Forms a ring that surrounds DNA.

The protein localises to the cell inner membrane. In terms of biological role, essential cell division protein that coordinates cell division and chromosome segregation. The N-terminus is involved in assembly of the cell-division machinery. The C-terminus functions as a DNA motor that moves dsDNA in an ATP-dependent manner towards the dif recombination site, which is located within the replication terminus region. Translocation stops specifically at Xer-dif sites, where FtsK interacts with the Xer recombinase, allowing activation of chromosome unlinking by recombination. FtsK orienting polar sequences (KOPS) guide the direction of DNA translocation. FtsK can remove proteins from DNA as it translocates, but translocation stops specifically at XerCD-dif site, thereby preventing removal of XerC and XerD from dif. In Neisseria meningitidis serogroup A / serotype 4A (strain DSM 15465 / Z2491), this protein is DNA translocase FtsK 2 (ftsK2).